A 170-amino-acid chain; its full sequence is Ubiquitin-conjugating enzyme E2 2 (170 aa).

A UBC core domain is found at P4–E150. C88 functions as the Glycyl thioester intermediate in the catalytic mechanism. The segment at S148–D170 is disordered. Residues D152 to D170 are compositionally biased toward acidic residues.

The protein belongs to the ubiquitin-conjugating enzyme family.

It localises to the cytoplasm. The protein localises to the nucleus. The catalysed reaction is S-ubiquitinyl-[E1 ubiquitin-activating enzyme]-L-cysteine + [E2 ubiquitin-conjugating enzyme]-L-cysteine = [E1 ubiquitin-activating enzyme]-L-cysteine + S-ubiquitinyl-[E2 ubiquitin-conjugating enzyme]-L-cysteine.. Its pathway is protein modification; protein ubiquitination. Catalyzes the covalent attachment of ubiquitin to other proteins. Plays a role in transcription regulation by catalyzing the monoubiquitination of histone H2B to form H2BK123ub1. H2BK123ub1 gives a specific tag for epigenetic transcriptional activation and is also a prerequisite for H3K4me and H3K79me formation. Also involved in postreplication repair of UV-damaged DNA, in N-end rule-dependent protein degradation and in sporulation. The polypeptide is Ubiquitin-conjugating enzyme E2 2 (UBC2) (Eremothecium gossypii (strain ATCC 10895 / CBS 109.51 / FGSC 9923 / NRRL Y-1056) (Yeast)).